A 115-amino-acid chain; its full sequence is Nitrogen regulatory protein P-II 1 (115 aa).

At tyrosine 54 the chain carries O-UMP-tyrosine.

Belongs to the P(II) protein family.

In terms of biological role, could be involved in the regulation of nitrogen fixation. This Methanothermobacter thermautotrophicus (strain ATCC 29096 / DSM 1053 / JCM 10044 / NBRC 100330 / Delta H) (Methanobacterium thermoautotrophicum) protein is Nitrogen regulatory protein P-II 1.